The primary structure comprises 486 residues: MSKDIRVRYAPSPTGLLHIGNARTALFNYLYARHHGGTFLIRIEDTDRKRHVEDGERSQLENLRWLGMDWDESPESHENYRQSERLDLYQKYIDQLLAEGKAYKSYVTEEELVAERERQEVAGETPRYINEYLGMSEEEKAAYIAEREAAGIIPTVRLAVNESGIYKWHDMVKGDIEFEGGNIGGDWIIQKKDGYPTYNFAVVIDDHDMQISHVIRGDDHIANTPKQLMVYEALGWEAPEFGHMTLIINSETGKKLSKRDTNTLQFIEDYRKKGYLPEAVFNFIALLGWNPGGEDEIFSREELIKLFDENRLSKSPAAFDQKKLDWMSNDYIKNADLETIFEMAKPFLEEAGRLTDKAEKLVELYKPQMKSVDEIIPLTDLFFSDFPELTEAEREVMTGETVPTVLEAFKAKLEAMTDDKFVTENIFPQIKAVQKETGIKGKNLFMPIRIAVSGEMHGPELPDTIFLLGREKSIQHIENMLKEISK.

The 'HIGH' region signature appears at 11–21 (PSPTGLLHIGN). The 'KMSKS' region signature appears at 255-259 (KLSKR). Lys-258 contributes to the ATP binding site.

Belongs to the class-I aminoacyl-tRNA synthetase family. Glutamate--tRNA ligase type 1 subfamily. As to quaternary structure, monomer.

It is found in the cytoplasm. The enzyme catalyses tRNA(Glu) + L-glutamate + ATP = L-glutamyl-tRNA(Glu) + AMP + diphosphate. In terms of biological role, catalyzes the attachment of glutamate to tRNA(Glu) in a two-step reaction: glutamate is first activated by ATP to form Glu-AMP and then transferred to the acceptor end of tRNA(Glu). In Streptococcus pneumoniae (strain Hungary19A-6), this protein is Glutamate--tRNA ligase.